The primary structure comprises 424 residues: UPF0597 protein Shew185_3080 (424 aa).

Belongs to the UPF0597 family.

This Shewanella baltica (strain OS185) protein is UPF0597 protein Shew185_3080.